A 211-amino-acid polypeptide reads, in one-letter code: Thiamine-phosphate synthase (211 aa).

4-amino-2-methyl-5-(diphosphooxymethyl)pyrimidine is bound by residues 37–41 and Asn-69; that span reads QLRIK. Asp-70 and Asp-89 together coordinate Mg(2+). Ser-108 lines the 4-amino-2-methyl-5-(diphosphooxymethyl)pyrimidine pocket. 134 to 136 serves as a coordination point for 2-[(2R,5Z)-2-carboxy-4-methylthiazol-5(2H)-ylidene]ethyl phosphate; it reads TQT. Residue Lys-137 coordinates 4-amino-2-methyl-5-(diphosphooxymethyl)pyrimidine. Residues Gly-166 and 186–187 each bind 2-[(2R,5Z)-2-carboxy-4-methylthiazol-5(2H)-ylidene]ethyl phosphate; that span reads VS.

This sequence belongs to the thiamine-phosphate synthase family. The cofactor is Mg(2+).

It catalyses the reaction 2-[(2R,5Z)-2-carboxy-4-methylthiazol-5(2H)-ylidene]ethyl phosphate + 4-amino-2-methyl-5-(diphosphooxymethyl)pyrimidine + 2 H(+) = thiamine phosphate + CO2 + diphosphate. The enzyme catalyses 2-(2-carboxy-4-methylthiazol-5-yl)ethyl phosphate + 4-amino-2-methyl-5-(diphosphooxymethyl)pyrimidine + 2 H(+) = thiamine phosphate + CO2 + diphosphate. It carries out the reaction 4-methyl-5-(2-phosphooxyethyl)-thiazole + 4-amino-2-methyl-5-(diphosphooxymethyl)pyrimidine + H(+) = thiamine phosphate + diphosphate. The protein operates within cofactor biosynthesis; thiamine diphosphate biosynthesis; thiamine phosphate from 4-amino-2-methyl-5-diphosphomethylpyrimidine and 4-methyl-5-(2-phosphoethyl)-thiazole: step 1/1. Condenses 4-methyl-5-(beta-hydroxyethyl)thiazole monophosphate (THZ-P) and 2-methyl-4-amino-5-hydroxymethyl pyrimidine pyrophosphate (HMP-PP) to form thiamine monophosphate (TMP). This chain is Thiamine-phosphate synthase, found in Escherichia coli O6:H1 (strain CFT073 / ATCC 700928 / UPEC).